We begin with the raw amino-acid sequence, 122 residues long: Flagellar hook-basal body complex protein FliE (122 aa).

Belongs to the FliE family.

It is found in the bacterial flagellum basal body. This is Flagellar hook-basal body complex protein FliE from Marinobacter nauticus (strain ATCC 700491 / DSM 11845 / VT8) (Marinobacter aquaeolei).